Reading from the N-terminus, the 324-residue chain is Protein ChrB (324 aa).

Functionally, together with ChrA1, this protein reduces chromate accumulation and is essential for chromate resistance, possibly as a regulatory protein. This is Protein ChrB from Cupriavidus metallidurans (strain ATCC 43123 / DSM 2839 / NBRC 102507 / CH34) (Ralstonia metallidurans).